The primary structure comprises 372 residues: tRNA pseudouridine synthase D (372 aa).

D85 functions as the Nucleophile in the catalytic mechanism. Positions 160-330 (GFTNYFGYQR…MQGSRRFMWG (171 aa)) constitute a TRUD domain.

Belongs to the pseudouridine synthase TruD family.

The catalysed reaction is uridine(13) in tRNA = pseudouridine(13) in tRNA. Its function is as follows. Responsible for synthesis of pseudouridine from uracil-13 in transfer RNAs. The protein is tRNA pseudouridine synthase D of Campylobacter jejuni subsp. jejuni serotype O:23/36 (strain 81-176).